Here is a 729-residue protein sequence, read N- to C-terminus: Polyribonucleotide nucleotidyltransferase (729 aa).

Mg(2+) contacts are provided by D485 and D491. In terms of domain architecture, KH spans 552-611 (PRITTMKVAEDKIRTIIGKGGATIKGLIESTGVSIDIDDSGVIQLFSPDKMALEEAQKQI). In terms of domain architecture, S1 motif spans 621-689 (GQTYQGKVSK…KQGRVKLEWK (69 aa)).

The protein belongs to the polyribonucleotide nucleotidyltransferase family. As to quaternary structure, component of the RNA degradosome, which is a multiprotein complex involved in RNA processing and mRNA degradation. Mg(2+) serves as cofactor.

It is found in the cytoplasm. The catalysed reaction is RNA(n+1) + phosphate = RNA(n) + a ribonucleoside 5'-diphosphate. Its function is as follows. Involved in mRNA degradation. Catalyzes the phosphorolysis of single-stranded polyribonucleotides processively in the 3'- to 5'-direction. The protein is Polyribonucleotide nucleotidyltransferase of Legionella pneumophila (strain Corby).